Consider the following 157-residue polypeptide: ATP synthase subunit b (157 aa).

The chain crosses the membrane as a helical span at residues 1 to 21 (MHFLDESFWLAISFIIFVYLI).

It belongs to the ATPase B chain family. As to quaternary structure, F-type ATPases have 2 components, F(1) - the catalytic core - and F(0) - the membrane proton channel. F(1) has five subunits: alpha(3), beta(3), gamma(1), delta(1), epsilon(1). F(0) has three main subunits: a(1), b(2) and c(10-14). The alpha and beta chains form an alternating ring which encloses part of the gamma chain. F(1) is attached to F(0) by a central stalk formed by the gamma and epsilon chains, while a peripheral stalk is formed by the delta and b chains.

It is found in the cell inner membrane. F(1)F(0) ATP synthase produces ATP from ADP in the presence of a proton or sodium gradient. F-type ATPases consist of two structural domains, F(1) containing the extramembraneous catalytic core and F(0) containing the membrane proton channel, linked together by a central stalk and a peripheral stalk. During catalysis, ATP synthesis in the catalytic domain of F(1) is coupled via a rotary mechanism of the central stalk subunits to proton translocation. In terms of biological role, component of the F(0) channel, it forms part of the peripheral stalk, linking F(1) to F(0). The protein is ATP synthase subunit b of Rickettsia bellii (strain RML369-C).